A 577-amino-acid polypeptide reads, in one-letter code: Arginine--tRNA ligase (577 aa).

Residues V124 to H132 carry the 'HIGH' region motif.

It belongs to the class-I aminoacyl-tRNA synthetase family. As to quaternary structure, monomer.

The protein resides in the cytoplasm. The catalysed reaction is tRNA(Arg) + L-arginine + ATP = L-arginyl-tRNA(Arg) + AMP + diphosphate. This is Arginine--tRNA ligase from Salmonella typhi.